A 111-amino-acid polypeptide reads, in one-letter code: Guanylate cyclase activator 2B (111 aa).

An N-terminal signal peptide occupies residues 1–26 (MGSRTLLGHLSVLAVVLLLLLQGTQS). A propeptide spanning residues 27-96 (VDIKYQGYQV…SILQALRTMD (70 aa)) is cleaved from the precursor. 3 cysteine pairs are disulfide-bonded: cysteine 67-cysteine 80, cysteine 100-cysteine 108, and cysteine 103-cysteine 111.

It belongs to the guanylin family.

Its subcellular location is the secreted. Functionally, endogenous activator of intestinal guanylate cyclase. It stimulates this enzyme through the same receptor binding region as the heat-stable enterotoxins. May be a potent physiological regulator of intestinal fluid and electrolyte transport. May be an autocrine/paracrine regulator of intestinal salt and water transport. In Cavia porcellus (Guinea pig), this protein is Guanylate cyclase activator 2B (GUCA2B).